The primary structure comprises 664 residues: DNA ligase (664 aa).

NAD(+) contacts are provided by residues 32 to 36 (DKEYD) and 80 to 81 (SL). K122 acts as the N6-AMP-lysine intermediate in catalysis. The NAD(+) site is built by R144, E178, and K314. 4 residues coordinate Zn(2+): C407, C410, C423, and C429. Residues 587–664 (IDENPFMDKT…NEEEFSNKIK (78 aa)) form the BRCT domain.

The protein belongs to the NAD-dependent DNA ligase family. LigA subfamily. Requires Mg(2+) as cofactor. It depends on Mn(2+) as a cofactor.

The enzyme catalyses NAD(+) + (deoxyribonucleotide)n-3'-hydroxyl + 5'-phospho-(deoxyribonucleotide)m = (deoxyribonucleotide)n+m + AMP + beta-nicotinamide D-nucleotide.. Functionally, DNA ligase that catalyzes the formation of phosphodiester linkages between 5'-phosphoryl and 3'-hydroxyl groups in double-stranded DNA using NAD as a coenzyme and as the energy source for the reaction. It is essential for DNA replication and repair of damaged DNA. This Clostridium botulinum (strain ATCC 19397 / Type A) protein is DNA ligase.